The sequence spans 549 residues: Probable glucuronosyltransferase Os01g0157700 (549 aa).

The Cytoplasmic portion of the chain corresponds to 1 to 16; that stretch reads MDSEERSKKRLRLWSR. A helical; Signal-anchor for type II membrane protein membrane pass occupies residues 17–37; sequence AVVHFSLCFAIGVFAALLPLA. Over 38 to 549 the chain is Lumenal; sequence ATGATSIDSI…TPEEGKTKEG (512 aa). N-linked (GlcNAc...) asparagine glycans are attached at residues N112, N139, N214, N229, N240, N251, N264, N269, and N300. The interval 232–252 is disordered; sequence ETTWDSSSNTTQTTWDSSSNK. Positions 350-363 are enriched in basic and acidic residues; that stretch reads IEQATPEKESLTKG. 3 disordered regions span residues 350–371, 413–432, and 441–524; these read IEQATPEKESLTKGDEEESHDM, EQETPEKENLTKGEEKESHD, and KIEE…KETH. Residues N421 and N452 are each glycosylated (N-linked (GlcNAc...) asparagine). 3 stretches are compositionally biased toward basic and acidic residues: residues 441-465, 472-496, and 503-524; these read KIEEQETPEKENLTKGDEKESHDMM, KIDEQETTEKESLTKGDEKESHDMM, and KIEEQETPEKESLTKGDEKETH.

This sequence belongs to the glycosyltransferase 43 family.

The protein resides in the golgi apparatus membrane. In terms of biological role, involved in the synthesis of glucuronoxylan hemicellulose in secondary cell walls. This Oryza sativa subsp. japonica (Rice) protein is Probable glucuronosyltransferase Os01g0157700.